The sequence spans 867 residues: Leucine--tRNA ligase (867 aa).

A 'HIGH' region motif is present at residues 43-53; that stretch reads PYPSGRLHMGH. Positions 627–631 match the 'KMSKS' region motif; the sequence is KMSKS. Residue Lys-630 coordinates ATP.

It belongs to the class-I aminoacyl-tRNA synthetase family.

The protein resides in the cytoplasm. It carries out the reaction tRNA(Leu) + L-leucine + ATP = L-leucyl-tRNA(Leu) + AMP + diphosphate. The sequence is that of Leucine--tRNA ligase from Phenylobacterium zucineum (strain HLK1).